We begin with the raw amino-acid sequence, 136 residues long: uncharacterized protein (136 aa).

Its subcellular location is the mitochondrion. This is an uncharacterized protein from Arabidopsis thaliana (Mouse-ear cress).